A 165-amino-acid chain; its full sequence is uncharacterized protein (165 aa).

A helical transmembrane segment spans residues Met15 to Phe35. Positions Ile67–Arg119 form a coiled coil. The disordered stretch occupies residues Val123–Leu156. Over residues Pro133–Ala154 the composition is skewed to pro residues.

It is found in the membrane. This is an uncharacterized protein from Acheta domesticus (House cricket).